We begin with the raw amino-acid sequence, 426 residues long: Enolase (426 aa).

Residue glutamine 163 coordinates (2R)-2-phosphoglycerate. Catalysis depends on glutamate 205, which acts as the Proton donor. The Mg(2+) site is built by aspartate 242, glutamate 285, and aspartate 312. Residues lysine 337, arginine 366, serine 367, and lysine 388 each contribute to the (2R)-2-phosphoglycerate site. The Proton acceptor role is filled by lysine 337.

Belongs to the enolase family. Mg(2+) serves as cofactor.

It localises to the cytoplasm. It is found in the secreted. The protein resides in the cell surface. The enzyme catalyses (2R)-2-phosphoglycerate = phosphoenolpyruvate + H2O. The protein operates within carbohydrate degradation; glycolysis; pyruvate from D-glyceraldehyde 3-phosphate: step 4/5. Its function is as follows. Catalyzes the reversible conversion of 2-phosphoglycerate (2-PG) into phosphoenolpyruvate (PEP). It is essential for the degradation of carbohydrates via glycolysis. This is Enolase from Phenylobacterium zucineum (strain HLK1).